The primary structure comprises 114 residues: Iron-sulfur cluster insertion protein ErpA (114 aa).

3 residues coordinate iron-sulfur cluster: C42, C106, and C108.

It belongs to the HesB/IscA family. Homodimer. Iron-sulfur cluster is required as a cofactor.

Its function is as follows. Required for insertion of 4Fe-4S clusters for at least IspG. In Pseudoalteromonas atlantica (strain T6c / ATCC BAA-1087), this protein is Iron-sulfur cluster insertion protein ErpA.